We begin with the raw amino-acid sequence, 246 residues long: Probable transcriptional regulatory protein YebC (246 aa).

The tract at residues 1–20 is disordered; it reads MAGHSKWANTRHRKAAQDAK.

Belongs to the TACO1 family.

The protein resides in the cytoplasm. The sequence is that of Probable transcriptional regulatory protein YebC from Shigella boydii serotype 4 (strain Sb227).